Consider the following 145-residue polypeptide: uncharacterized protein (145 aa).

The tract at residues 62-145 is disordered; that stretch reads LPSVGGRMTA…QLPQQGGCPG (84 aa). Over residues 84–95 the composition is skewed to pro residues; the sequence is ASSPEDPPLPHP.

This is an uncharacterized protein from Homo sapiens (Human).